Reading from the N-terminus, the 367-residue chain is BTB/POZ domain-containing protein Tiwaz (367 aa).

Disordered stretches follow at residues 16–46 (LTVD…PRDL) and 62–87 (SSPT…SSVT). The segment covering 28–45 (CDMDRERERDVKALEPRD) has biased composition (basic and acidic residues). Residues 135–205 (APVHIDVGGT…MRNSRLLIAE (71 aa)) form the BTB domain. Positions 240–261 (GNYLVAPPTPPARHIKTSPRTS) are disordered.

Functions with the transcription factor TfAP-2 to regulate octopamine neuronal signaling pathways that control behaviors such as male aggression, male mating, and the initiation of feeding. Required for TfAP-2 transcriptional activity in octopaminergic neurons. Functions with TfAP-2 to regulate expression of genes which are involved in promoting octopamine production and secretion from octopaminergic neurons, such as Tbh and Vmat. Octopamine then modulates feeding and male aggression by regulating the expression of the satiation hormone Dsk in insulin-producing cells (IPCs). Functions with octopamine and Dsk as part of a negative feedback loop to prevent overeating; acts with TfAP-2 to regulate octopamine signaling pathways that initiate feeding, then octopamine activates expression of Dsk which inhibits consummatory behavior. May also be involved in negatively regulating nociception in larvae to prevent spontaneous pain and hyperalgesia. This chain is BTB/POZ domain-containing protein Tiwaz, found in Drosophila melanogaster (Fruit fly).